The chain runs to 773 residues: 4'-phosphopantetheine phosphatase (773 aa).

An N-acetylalanine modification is found at Ala-2. A pantothenate kinase region spans residues 2 to 402; that stretch reads AECGASGSGS…SPELGPAQRA (401 aa). Positions 196 and 199 each coordinate acetyl-CoA. Tyr-320 carries the 3'-nitrotyrosine modification. 2 positions are modified to phosphoserine: Ser-393 and Ser-404. A 4'-phosphopantetheine phosphatase region spans residues 403–773; sequence RSGTFDLLEM…VIFKYEVPAE (371 aa). The residue at position 406 (Thr-406) is a Phosphothreonine. Mn(2+) is bound by residues Asp-623, Asn-624, and Asp-659. Residues 724 to 728 carry the Subfamily II EGMGR motif motif; that stretch reads EGMGR.

The protein in the N-terminal section; belongs to the type II pantothenate kinase family. This sequence in the C-terminal section; belongs to the damage-control phosphatase family. Phosphopantetheine phosphatase II subfamily. In terms of assembly, homodimer. Interacts with PKM. It depends on Mn(2+) as a cofactor. Ni(2+) is required as a cofactor. As to expression, widely expressed with high expression in the muscle. Expressed in the retina and lens epithelium, mainly in ganglion cell layer, outer plexiform layer and retinal pigment layer (at protein level).

Its subcellular location is the cytoplasm. The enzyme catalyses (R)-4'-phosphopantetheine + H2O = (R)-pantetheine + phosphate. It catalyses the reaction (R)-4'-phosphopantetheine sulfonate + H2O = (R)-pantetheine sulfonate + phosphate. The catalysed reaction is (R)-4'-phospho-S-sulfopantetheine + H2O = (R)-S-sulfopantetheine + phosphate. Its activity is regulated as follows. Activity is strongly promoted by Co(2+), Ni(2+), Mg(2+) and Mn(2+). Activity is inhibited by EDTA. In terms of biological role, phosphatase which shows a preference for 4'-phosphopantetheine and its oxidatively damaged forms (sulfonate or S-sulfonate), providing strong indirect evidence that the phosphatase activity pre-empts damage in the coenzyme A (CoA) pathway. Hydrolyzing excess 4'-phosphopantetheine could constitute a directed overflow mechanism to prevent its oxidation to the S-sulfonate, sulfonate, or other forms. Hydrolyzing 4'-phosphopantetheine sulfonate or S-sulfonate would forestall their conversion to inactive forms of CoA and acyl carrier protein. May play a role in the physiological regulation of CoA intracellular levels. In Homo sapiens (Human), this protein is 4'-phosphopantetheine phosphatase.